The following is a 277-amino-acid chain: Caspase-3 (277 aa).

The residue at position 1 (M1) is an N-acetylmethionine. Propeptides lie at residues 1–9 and 10–28; these read MENTENSVD and SKSI…KSVD. Positions 1–10 are enriched in polar residues; the sequence is MENTENSVDS. The disordered stretch occupies residues 1–25; it reads MENTENSVDSKSIKNSEPKIIHGSK. The residue at position 11 (K11) is an N6-acetyllysine. Over residues 11 to 20 the composition is skewed to basic and acidic residues; the sequence is KSIKNSEPKI. S26 is subject to Phosphoserine. Catalysis depends on residues H121 and C163. C163 carries the post-translational modification S-nitrosocysteine; in inhibited form.

This sequence belongs to the peptidase C14A family. As to quaternary structure, heterotetramer that consists of two anti-parallel arranged heterodimers, each one formed by a 17 kDa (p17) and a 12 kDa (p12) subunit. Interacts with BIRC6/bruce. Cleavage by granzyme B, caspase-6, caspase-8 and caspase-10 generates the two active subunits. Additional processing of the propeptides is likely due to the autocatalytic activity of the activated protease. Active heterodimers between the small subunit of caspase-7 protease and the large subunit of caspase-3 also occur and vice versa. Post-translationally, S-nitrosylated on its catalytic site cysteine in unstimulated cell lines and denitrosylated upon activation of the Fas apoptotic pathway, associated with an increase in intracellular caspase activity. Fas therefore activates caspase-3 not only by inducing the cleavage of the caspase zymogen to its active subunits, but also by stimulating the denitrosylation of its active site thiol. In terms of processing, ubiquitinated by BIRC6; this activity is inhibited by DIABLO/SMAC.

It localises to the cytoplasm. It carries out the reaction Strict requirement for an Asp residue at positions P1 and P4. It has a preferred cleavage sequence of Asp-Xaa-Xaa-Asp-|- with a hydrophobic amino-acid residue at P2 and a hydrophilic amino-acid residue at P3, although Val or Ala are also accepted at this position.. With respect to regulation, inhibited by BIRC6; following inhibition of BIRC6-caspase binding by DIABLO/SMAC, BIRC6 is subjected to caspase cleavage, leading to an increase in active caspases. In terms of biological role, involved in the activation cascade of caspases responsible for apoptosis execution. At the onset of apoptosis, it proteolytically cleaves poly(ADP-ribose) polymerase PARP1 at a '216-Asp-|-Gly-217' bond. Cleaves and activates sterol regulatory element binding proteins (SREBPs) between the basic helix-loop-helix leucine zipper domain and the membrane attachment domain. Cleaves and activates caspase-6, -7 and -9 (CASP6, CASP7 and CASP9, respectively). Cleaves and inactivates interleukin-18 (IL18). Triggers cell adhesion in sympathetic neurons through RET cleavage. Cleaves IL-1 beta between an Asp and an Ala, releasing the mature cytokine which is involved in a variety of inflammatory processes. Cleaves and inhibits serine/threonine-protein kinase AKT1 in response to oxidative stress. Acts as an inhibitor of type I interferon production during virus-induced apoptosis by mediating cleavage of antiviral proteins CGAS, IRF3 and MAVS, thereby preventing cytokine overproduction. Also involved in pyroptosis by mediating cleavage and activation of gasdermin-E (GSDME). Cleaves XRCC4 and phospholipid scramblase proteins XKR4, XKR8 and XKR9, leading to promote phosphatidylserine exposure on apoptotic cell surface. Cleaves BIRC6 following inhibition of BIRC6-caspase binding by DIABLO/SMAC. The chain is Caspase-3 (CASP3) from Saimiri boliviensis boliviensis (Bolivian squirrel monkey).